Here is a 465-residue protein sequence, read N- to C-terminus: MKPSLLVFTVYLLWLKDCHCAPTWKDKTDMHGNLKGFSEAGDIDVDEEVKKALIGMKQMKIMMERREEEHTNLMKTLKKCKEEKQEALKLMNEVQEHLEEEESLCQVSLTDSWDECKSCLESNCMRFHTTCQPSWSSMKNTVEQFFRNIYQYLFPFDEDNEKDLPVGEKFIEEDAQVAQIENVFNQLTVDVRFLFNRSLNVFKQMQQEFDQTFQSYFMSDTDLMQPNFLPALSKEPRKKADPVQSWDIPSFFQLFYNFSLSIYHSISTTITKTLNAIEDLPKQDNDSNHGSLSSKTLPVQHRGPYGEFGQNLSECFQFHARCQKCQDYLWEDCPDVPELHTKVDEALELVNISHQQYAQVLQMTQHHLEDTTYLMEKMREEFGWVADLANQAPGAENIFDSTKMVPNIHEGNFSKQDETMIDLSILSSPNFTLKIPLEESAETSNFISYMLEKAVQHFKKHFKTW.

The signal sequence occupies residues 1 to 20; sequence MKPSLLVFTVYLLWLKDCHC. Residues 62–106 adopt a coiled-coil conformation; sequence MMERREEEHTNLMKTLKKCKEEKQEALKLMNEVQEHLEEEESLCQ. Intrachain disulfides connect C105/C333, C116/C325, C119/C322, and C124/C315. N-linked (GlcNAc...) asparagine glycans are attached at residues N196, N257, N285, N311, N351, N412, and N430.

Belongs to the clusterin family. Retina-specific (at protein level). In the light-adapted retina, expressed in the outer segment of cone photoreceptors. In the dark-adapted retina, strongly expressed in the outer plexiform layer in the region of contact between the cone pedicles and second order neurons with little or no expression in the cone photoreceptor outer segments.

The protein localises to the secreted. The protein is Clusterin-like protein 1 (CLUL1) of Canis lupus familiaris (Dog).